Reading from the N-terminus, the 81-residue chain is ATP synthase subunit c, chloroplastic (81 aa).

The next 2 membrane-spanning stretches (helical) occupy residues 3 to 23 and 57 to 77; these read PLIA…ASIG and LAFM…LLFA.

This sequence belongs to the ATPase C chain family. In terms of assembly, F-type ATPases have 2 components, F(1) - the catalytic core - and F(0) - the membrane proton channel. F(1) has five subunits: alpha(3), beta(3), gamma(1), delta(1), epsilon(1). F(0) has four main subunits: a(1), b(1), b'(1) and c(10-14). The alpha and beta chains form an alternating ring which encloses part of the gamma chain. F(1) is attached to F(0) by a central stalk formed by the gamma and epsilon chains, while a peripheral stalk is formed by the delta, b and b' chains.

The protein resides in the plastid. Its subcellular location is the chloroplast thylakoid membrane. Functionally, f(1)F(0) ATP synthase produces ATP from ADP in the presence of a proton or sodium gradient. F-type ATPases consist of two structural domains, F(1) containing the extramembraneous catalytic core and F(0) containing the membrane proton channel, linked together by a central stalk and a peripheral stalk. During catalysis, ATP synthesis in the catalytic domain of F(1) is coupled via a rotary mechanism of the central stalk subunits to proton translocation. In terms of biological role, key component of the F(0) channel; it plays a direct role in translocation across the membrane. A homomeric c-ring of between 10-14 subunits forms the central stalk rotor element with the F(1) delta and epsilon subunits. The protein is ATP synthase subunit c, chloroplastic of Agrostis stolonifera (Creeping bentgrass).